The chain runs to 546 residues: Chaperonin GroEL 1 (546 aa).

ATP is bound by residues 30–33 (TLGP), Lys-51, 87–91 (DGTTT), Gly-415, 479–481 (NAA), and Asp-495.

This sequence belongs to the chaperonin (HSP60) family. Forms a cylinder of 14 subunits composed of two heptameric rings stacked back-to-back. Interacts with the co-chaperonin GroES.

It is found in the cytoplasm. It catalyses the reaction ATP + H2O + a folded polypeptide = ADP + phosphate + an unfolded polypeptide.. Functionally, together with its co-chaperonin GroES, plays an essential role in assisting protein folding. The GroEL-GroES system forms a nano-cage that allows encapsulation of the non-native substrate proteins and provides a physical environment optimized to promote and accelerate protein folding. The chain is Chaperonin GroEL 1 from Paraburkholderia xenovorans (strain LB400).